We begin with the raw amino-acid sequence, 100 residues long: MAKKSLIYREKKRQKLEQQYHLIRRSSKKEISQIPSLSEKWKIHGKLQSPPRNSAPTRLHRRCFSTGRPRANYRDFGLSGHILREMVHAGLLPGATRSSW.

Belongs to the universal ribosomal protein uS14 family. As to quaternary structure, part of the 30S ribosomal subunit.

It localises to the plastid. It is found in the chloroplast. Binds 16S rRNA, required for the assembly of 30S particles. The protein is Small ribosomal subunit protein uS14c of Lobularia maritima (Sweet alyssum).